The primary structure comprises 262 residues: UPF0619 GPI-anchored membrane protein C1322.10 (262 aa).

The first 20 residues, 1–20 (MLARVGTTLFFLANALAAYA), serve as a signal peptide directing secretion. Disordered regions lie at residues 136–165 (STSA…SSST) and 175–194 (ISSS…SGSI). 2 N-linked (GlcNAc...) asparagine glycosylation sites follow: asparagine 207 and asparagine 227. A lipid anchor (GPI-like-anchor amidated asparagine) is attached at asparagine 242. Residues 243 to 262 (GVAQLSVAACMGIAALMLIA) constitute a propeptide, removed in mature form.

Belongs to the UPF0619 family.

It is found in the golgi apparatus membrane. It localises to the cell membrane. The polypeptide is UPF0619 GPI-anchored membrane protein C1322.10 (Schizosaccharomyces pombe (strain 972 / ATCC 24843) (Fission yeast)).